Here is a 737-residue protein sequence, read N- to C-terminus: 1,4-alpha-glucan branching enzyme GlgB (737 aa).

The active-site Nucleophile is Asp-419. The active-site Proton donor is Glu-472.

It belongs to the glycosyl hydrolase 13 family. GlgB subfamily. Monomer.

It catalyses the reaction Transfers a segment of a (1-&gt;4)-alpha-D-glucan chain to a primary hydroxy group in a similar glucan chain.. The protein operates within glycan biosynthesis; glycogen biosynthesis. Catalyzes the formation of the alpha-1,6-glucosidic linkages in glycogen by scission of a 1,4-alpha-linked oligosaccharide from growing alpha-1,4-glucan chains and the subsequent attachment of the oligosaccharide to the alpha-1,6 position. The chain is 1,4-alpha-glucan branching enzyme GlgB from Mesorhizobium japonicum (strain LMG 29417 / CECT 9101 / MAFF 303099) (Mesorhizobium loti (strain MAFF 303099)).